The following is a 503-amino-acid chain: ATP synthase subunit alpha (503 aa).

ATP is bound at residue 170 to 177 (GDRQTGKT).

The protein belongs to the ATPase alpha/beta chains family. As to quaternary structure, F-type ATPases have 2 components, CF(1) - the catalytic core - and CF(0) - the membrane proton channel. CF(1) has five subunits: alpha(3), beta(3), gamma(1), delta(1), epsilon(1). CF(0) has three main subunits: a(1), b(2) and c(9-12). The alpha and beta chains form an alternating ring which encloses part of the gamma chain. CF(1) is attached to CF(0) by a central stalk formed by the gamma and epsilon chains, while a peripheral stalk is formed by the delta and b chains.

Its subcellular location is the cell inner membrane. The enzyme catalyses ATP + H2O + 4 H(+)(in) = ADP + phosphate + 5 H(+)(out). Its function is as follows. Produces ATP from ADP in the presence of a proton gradient across the membrane. The alpha chain is a regulatory subunit. This is ATP synthase subunit alpha from Thermotoga maritima (strain ATCC 43589 / DSM 3109 / JCM 10099 / NBRC 100826 / MSB8).